The following is a 342-amino-acid chain: Probable dual-specificity RNA methyltransferase RlmN (342 aa).

The Proton acceptor role is filled by E91. The Radical SAM core domain maps to 97–327 (YKHGNSICVS…TTIRREMGAD (231 aa)). C104 and C332 are oxidised to a cystine. Residues C111, C115, and C118 each contribute to the [4Fe-4S] cluster site. Residues 158-159 (GE), S190, 213-215 (SLH), and N289 contribute to the S-adenosyl-L-methionine site. The active-site S-methylcysteine intermediate is C332.

This sequence belongs to the radical SAM superfamily. RlmN family. The cofactor is [4Fe-4S] cluster.

It localises to the cytoplasm. It catalyses the reaction adenosine(2503) in 23S rRNA + 2 reduced [2Fe-2S]-[ferredoxin] + 2 S-adenosyl-L-methionine = 2-methyladenosine(2503) in 23S rRNA + 5'-deoxyadenosine + L-methionine + 2 oxidized [2Fe-2S]-[ferredoxin] + S-adenosyl-L-homocysteine. The catalysed reaction is adenosine(37) in tRNA + 2 reduced [2Fe-2S]-[ferredoxin] + 2 S-adenosyl-L-methionine = 2-methyladenosine(37) in tRNA + 5'-deoxyadenosine + L-methionine + 2 oxidized [2Fe-2S]-[ferredoxin] + S-adenosyl-L-homocysteine. Its function is as follows. Specifically methylates position 2 of adenine 2503 in 23S rRNA and position 2 of adenine 37 in tRNAs. This chain is Probable dual-specificity RNA methyltransferase RlmN, found in Clostridium botulinum (strain Loch Maree / Type A3).